The following is a 222-amino-acid chain: Sugar fermentation stimulation protein homolog (222 aa).

It belongs to the SfsA family.

This Thermotoga neapolitana (strain ATCC 49049 / DSM 4359 / NBRC 107923 / NS-E) protein is Sugar fermentation stimulation protein homolog.